Consider the following 211-residue polypeptide: Large ribosomal subunit protein uL3 (211 aa).

Positions 134-155 are disordered; sequence ATHGNSLSHRAPGSIGQNQTPG. Gln-152 carries the N5-methylglutamine modification.

Belongs to the universal ribosomal protein uL3 family. Part of the 50S ribosomal subunit. Forms a cluster with proteins L14 and L19. Post-translationally, methylated by PrmB.

Its function is as follows. One of the primary rRNA binding proteins, it binds directly near the 3'-end of the 23S rRNA, where it nucleates assembly of the 50S subunit. This chain is Large ribosomal subunit protein uL3, found in Methylococcus capsulatus (strain ATCC 33009 / NCIMB 11132 / Bath).